Here is a 320-residue protein sequence, read N- to C-terminus: uncharacterized protein (320 aa).

The region spanning 13–132 (ALVLKSLLRE…VLYPEIPSPE (120 aa)) is the Arf-GAP domain. The segment at 28-52 (CADCKRNEQPRWASWNLGVFICIRC) adopts a C4-type zinc-finger fold. 3 disordered regions span residues 153 to 212 (NTAS…STRQ), 227 to 261 (RPQV…YGAF), and 284 to 320 (NVTS…DVWK). Low complexity predominate over residues 154–176 (TASRSSSAHSVKSTSSATVTNVT). Composition is skewed to polar residues over residues 183–210 (SATT…APST) and 228–244 (PQVS…YQNL). 2 stretches are compositionally biased toward low complexity: residues 245–257 (PSPV…SSQP) and 295–310 (SPVQ…SLDS).

The protein resides in the cytoplasm. It localises to the golgi apparatus. Functionally, GTPase-activating protein for the ADP ribosylation factor family. This is an uncharacterized protein from Schizosaccharomyces pombe (strain 972 / ATCC 24843) (Fission yeast).